The chain runs to 111 residues: MISTVALFWALCVVCIVNMARYFSSLRALLVVLRGCDPLLYQYVDGGGFFTSHGQPSKQMRLVWYIYAQRYRDHHDDEFIRRCERLRCQFILTSALCGLVVVSMVALLIWH.

2 helical membrane passes run 1 to 21 and 90 to 110; these read MISTVALFWALCVVCIVNMAR and FILTSALCGLVVVSMVALLIW.

Belongs to the universal stress protein B family.

It localises to the cell inner membrane. This Enterobacter sp. (strain 638) protein is Universal stress protein B.